We begin with the raw amino-acid sequence, 282 residues long: Bifunctional protein FolD (282 aa).

NADP(+)-binding positions include 166–168 and Ile232; that span reads GAS.

This sequence belongs to the tetrahydrofolate dehydrogenase/cyclohydrolase family. As to quaternary structure, homodimer.

The catalysed reaction is (6R)-5,10-methylene-5,6,7,8-tetrahydrofolate + NADP(+) = (6R)-5,10-methenyltetrahydrofolate + NADPH. It carries out the reaction (6R)-5,10-methenyltetrahydrofolate + H2O = (6R)-10-formyltetrahydrofolate + H(+). It functions in the pathway one-carbon metabolism; tetrahydrofolate interconversion. Catalyzes the oxidation of 5,10-methylenetetrahydrofolate to 5,10-methenyltetrahydrofolate and then the hydrolysis of 5,10-methenyltetrahydrofolate to 10-formyltetrahydrofolate. This chain is Bifunctional protein FolD, found in Histophilus somni (strain 129Pt) (Haemophilus somnus).